The sequence spans 99 residues: Putative protein tag-209 (99 aa).

The N-terminal stretch at Met-1 to Ser-16 is a signal peptide.

This chain is Putative protein tag-209 (tag-209), found in Caenorhabditis elegans.